A 314-amino-acid chain; its full sequence is Thioredoxin reductase aclD (314 aa).

FAD is bound by residues 13–16 (GGPA), 35–40 (DSKSYR), H47, and A112. C136 and C139 are oxidised to a cystine. FAD is bound by residues D281 and 288-289 (AA).

This sequence belongs to the class-II pyridine nucleotide-disulfide oxidoreductase family. In terms of assembly, homodimer. Requires FAD as cofactor.

It functions in the pathway mycotoxin biosynthesis. Functionally, thioredoxin reductase; part of the gene cluster that mediates the biosynthesis of aspirochlorine (or antibiotic A30641), an unusual halogenated spiro compound with distinctive antifungal properties due to selective inhibition of protein biosynthesis, and which is also active against bacteria, viruses, and murine tumor cells. The non-ribosomal peptide synthetase (NRPS) aclP is responsible the formation of the diketopiperazine (DKP) core from the condensation of 2 phenylalanine residues. One Phe residue is tailored into chlorotyrosine by hydroxylation and chlorination, whereas the second Phe undergoes an unprecedented C-C bond cleavage to be converted into glycine. After formation of the DKP, sulfur is incorporated into the DKP by conjugation with glutathione by aclG, followed by its stepwise degradation to the thiol by aclI, aclJ and aclK, and the dithiol oxidation by aclT. In addition, oxygenases (aclB, aclC, aclL and aclO) and O-methyltransferases (aclM and aclU) act as tailoring enzymes to produce the intermediate dechloroaspirochlorine. Ultimately, chlorination of dechloroaspirochlorine by the halogenase aclH is the last step in the aspirochlorine pathway. In Aspergillus oryzae (strain ATCC 42149 / RIB 40) (Yellow koji mold), this protein is Thioredoxin reductase aclD.